A 247-amino-acid chain; its full sequence is tRNA pseudouridine synthase A (247 aa).

Aspartate 52 serves as the catalytic Nucleophile. Residue tyrosine 113 participates in substrate binding.

This sequence belongs to the tRNA pseudouridine synthase TruA family. In terms of assembly, homodimer.

The enzyme catalyses uridine(38/39/40) in tRNA = pseudouridine(38/39/40) in tRNA. Its function is as follows. Formation of pseudouridine at positions 38, 39 and 40 in the anticodon stem and loop of transfer RNAs. The protein is tRNA pseudouridine synthase A of Bartonella henselae (strain ATCC 49882 / DSM 28221 / CCUG 30454 / Houston 1) (Rochalimaea henselae).